The primary structure comprises 421 residues: Histidine--tRNA ligase (421 aa).

This sequence belongs to the class-II aminoacyl-tRNA synthetase family. Homodimer.

The protein localises to the cytoplasm. The catalysed reaction is tRNA(His) + L-histidine + ATP = L-histidyl-tRNA(His) + AMP + diphosphate + H(+). This Francisella tularensis subsp. holarctica (strain LVS) protein is Histidine--tRNA ligase.